Reading from the N-terminus, the 116-residue chain is Large ribosomal subunit protein uL18 (116 aa).

This sequence belongs to the universal ribosomal protein uL18 family. As to quaternary structure, part of the 50S ribosomal subunit; part of the 5S rRNA/L5/L18/L25 subcomplex. Contacts the 5S and 23S rRNAs.

This is one of the proteins that bind and probably mediate the attachment of the 5S RNA into the large ribosomal subunit, where it forms part of the central protuberance. This chain is Large ribosomal subunit protein uL18, found in Shewanella oneidensis (strain ATCC 700550 / JCM 31522 / CIP 106686 / LMG 19005 / NCIMB 14063 / MR-1).